Reading from the N-terminus, the 286-residue chain is UPF0761 membrane protein KPN78578_41360 (286 aa).

The next 7 helical transmembrane spans lie at 44–64 (LLSL…FPMF), 74–94 (FIFA…IEQF), 104–124 (VGAF…DSAL), 140–160 (FAVY…SLAI), 183–203 (LFPL…VPTT), 210–230 (AVIG…AFAL), and 244–264 (VISV…IVLL).

Belongs to the UPF0761 family.

Its subcellular location is the cell inner membrane. The sequence is that of UPF0761 membrane protein KPN78578_41360 from Klebsiella pneumoniae subsp. pneumoniae (strain ATCC 700721 / MGH 78578).